Consider the following 242-residue polypeptide: Cytochrome c oxidase subunit 2 (242 aa).

Over 7–33 (DVPVPYGLYFQDSATPTFDGIIELHDI) the chain is Mitochondrial intermembrane. The chain crosses the membrane as a helical span at residues 34–55 (VMFYIVVTIVLVSYLLFVIIKN). Over 56–73 (FSNDHISYKYLTHGTTLE) the chain is Mitochondrial matrix. The helical transmembrane segment at 74–98 (IVWTIFPVVILLFIAFPSFILLYLC) threads the bilayer. The Mitochondrial intermembrane segment spans residues 99-242 (DEVIDPAMTI…DKFLSWLDEQ (144 aa)). Positions 177, 212, 214, 216, 220, and 223 each coordinate Cu cation. Position 214 (Glu-214) interacts with Mg(2+).

This sequence belongs to the cytochrome c oxidase subunit 2 family. As to quaternary structure, component of the cytochrome c oxidase (complex IV, CIV), a multisubunit enzyme composed of a catalytic core of 3 subunits and several supernumerary subunits. The complex exists as a monomer or a dimer and forms supercomplexes (SCs) in the inner mitochondrial membrane with ubiquinol-cytochrome c oxidoreductase (cytochrome b-c1 complex, complex III, CIII). The cofactor is Cu cation. The signal sequence of COX2 is processed by IMP1.

The protein localises to the mitochondrion inner membrane. The catalysed reaction is 4 Fe(II)-[cytochrome c] + O2 + 8 H(+)(in) = 4 Fe(III)-[cytochrome c] + 2 H2O + 4 H(+)(out). Functionally, component of the cytochrome c oxidase, the last enzyme in the mitochondrial electron transport chain which drives oxidative phosphorylation. The respiratory chain contains 3 multisubunit complexes succinate dehydrogenase (complex II, CII), ubiquinol-cytochrome c oxidoreductase (cytochrome b-c1 complex, complex III, CIII) and cytochrome c oxidase (complex IV, CIV), that cooperate to transfer electrons derived from NADH and succinate to molecular oxygen, creating an electrochemical gradient over the inner membrane that drives transmembrane transport and the ATP synthase. Cytochrome c oxidase is the component of the respiratory chain that catalyzes the reduction of oxygen to water. Electrons originating from reduced cytochrome c in the intermembrane space (IMS) are transferred via the dinuclear copper A center (CU(A)) of subunit 2 and heme A of subunit 1 to the active site in subunit 1, a binuclear center (BNC) formed by heme A3 and copper B (CU(B)). The BNC reduces molecular oxygen to 2 water molecules using 4 electrons from cytochrome c in the IMS and 4 protons from the mitochondrial matrix. This chain is Cytochrome c oxidase subunit 2 (COX2), found in Yarrowia lipolytica (strain CLIB 122 / E 150) (Yeast).